We begin with the raw amino-acid sequence, 538 residues long: Chaperonin GroEL 1 (538 aa).

ATP is bound by residues threonine 29–proline 32, aspartate 86–threonine 90, glycine 413, and aspartate 494.

The protein belongs to the chaperonin (HSP60) family. As to quaternary structure, forms a cylinder of 14 subunits composed of two heptameric rings stacked back-to-back. Interacts with the co-chaperonin GroES.

Its subcellular location is the cytoplasm. It catalyses the reaction ATP + H2O + a folded polypeptide = ADP + phosphate + an unfolded polypeptide.. In terms of biological role, together with its co-chaperonin GroES, plays an essential role in assisting protein folding. The GroEL-GroES system forms a nano-cage that allows encapsulation of the non-native substrate proteins and provides a physical environment optimized to promote and accelerate protein folding. The protein is Chaperonin GroEL 1 of Mycolicibacterium paratuberculosis (strain ATCC BAA-968 / K-10) (Mycobacterium paratuberculosis).